We begin with the raw amino-acid sequence, 176 residues long: Japanin-like-RS (176 aa).

A signal peptide spans 1–24 (MKVLLCLVCSFYIIVSSITTMTTG). 2 disulfide bridges follow: Cys52–Cys174 and Cys138–Cys162. Residue Asn155 is glycosylated (N-linked (GlcNAc...) asparagine).

This sequence belongs to the calycin superfamily. Lipocalin family. As to quaternary structure, homodimer; non-disulfide-linked. Each monomer accommodates one molecule of cholesterol in a pocket. Expressed in salivary glands.

It localises to the secreted. Functionally, salivary tick protein that modulates host immune response. This protein blocks dendritic cell (DC) differentiation from monocytes. In addition, it inhibits up-regulation of costimulatory molecules and pro-inflammatory cytokines in response to stimuli and promotes up-regulation of co-inhibitory molecules and the anti-inflammatory cytokine interleukin-10. It has a pocket to accomodate cholesterol, which may have immune-modulatory roles, either directly or through interactions with the host gut microbiota. The chain is Japanin-like-RS from Rhipicephalus sanguineus (Brown dog tick).